The chain runs to 244 residues: tRNA pseudouridine synthase A (244 aa).

The active-site Nucleophile is the Asp-53. Tyr-111 contributes to the substrate binding site.

The protein belongs to the tRNA pseudouridine synthase TruA family. As to quaternary structure, homodimer.

The enzyme catalyses uridine(38/39/40) in tRNA = pseudouridine(38/39/40) in tRNA. Functionally, formation of pseudouridine at positions 38, 39 and 40 in the anticodon stem and loop of transfer RNAs. The chain is tRNA pseudouridine synthase A from Bacillus sp. (strain KSM-64).